The primary structure comprises 357 residues: Probable xyloglucan endotransglucosylase/hydrolase protein 29 (357 aa).

A signal peptide spans 1-31 (MRDSIYLLWIDNRLVVIIMMVMMVSCRCVLG). Residues 32-232 (LENINPIFFD…YTFSPFVSEF (201 aa)) form the GH16 domain. Glu-117 acts as the Nucleophile in catalysis. Residue Glu-121 is the Proton donor of the active site. Residues Glu-121 and 134 to 136 (QTN) contribute to the xyloglucan site. A glycan (N-linked (GlcNAc...) asparagine) is linked at Asn-140. Residues 144–148 (NRGRE), 211–212 (SW), and Gly-216 contribute to the xyloglucan site. 2 N-linked (GlcNAc...) asparagine glycosylation sites follow: Asn-241 and Asn-262. Residues Cys-299 and Cys-312 are joined by a disulfide bond. Residue Arg-304 participates in xyloglucan binding. A disordered region spans residues 326–357 (GRLKFGGSHPKVHKARKKRRRNRSTPVVSADL). Residues 335–348 (PKVHKARKKRRRNR) are compositionally biased toward basic residues. Residue Asn-347 is glycosylated (N-linked (GlcNAc...) asparagine).

It belongs to the glycosyl hydrolase 16 family. XTH group 3 subfamily. Post-translationally, contains at least one intrachain disulfide bond essential for its enzymatic activity.

It localises to the secreted. The protein resides in the cell wall. It is found in the extracellular space. Its subcellular location is the apoplast. It carries out the reaction breaks a beta-(1-&gt;4) bond in the backbone of a xyloglucan and transfers the xyloglucanyl segment on to O-4 of the non-reducing terminal glucose residue of an acceptor, which can be a xyloglucan or an oligosaccharide of xyloglucan.. Catalyzes xyloglucan endohydrolysis (XEH) and/or endotransglycosylation (XET). Cleaves and religates xyloglucan polymers, an essential constituent of the primary cell wall, and thereby participates in cell wall construction of growing tissues. This Arabidopsis thaliana (Mouse-ear cress) protein is Probable xyloglucan endotransglucosylase/hydrolase protein 29 (XTH29).